Here is a 185-residue protein sequence, read N- to C-terminus: MKTAQELRVGNVVQIGSDAWVISKTEYNKSGRNAAVVKLKMKNLLTNAGQESVYKADDKFDVVMLDRKEVTYSYFADPMYVFMDADYNQYEVEAEMMGDALNYLEDGMACEVVFYNEKAISVELPTILVREITYTEPAVKGDTSSGKVLKNAKLATGFELQVPLFCNTGDKIEIDTRTHEYRSRA.

Belongs to the elongation factor P family.

Its subcellular location is the cytoplasm. Its pathway is protein biosynthesis; polypeptide chain elongation. Its function is as follows. Involved in peptide bond synthesis. Stimulates efficient translation and peptide-bond synthesis on native or reconstituted 70S ribosomes in vitro. Probably functions indirectly by altering the affinity of the ribosome for aminoacyl-tRNA, thus increasing their reactivity as acceptors for peptidyl transferase. This Burkholderia multivorans (strain ATCC 17616 / 249) protein is Elongation factor P.